The sequence spans 129 residues: Large ribosomal subunit protein uL22 (129 aa).

The protein belongs to the universal ribosomal protein uL22 family. Part of the 50S ribosomal subunit.

This protein binds specifically to 23S rRNA; its binding is stimulated by other ribosomal proteins, e.g. L4, L17, and L20. It is important during the early stages of 50S assembly. It makes multiple contacts with different domains of the 23S rRNA in the assembled 50S subunit and ribosome. Functionally, the globular domain of the protein is located near the polypeptide exit tunnel on the outside of the subunit, while an extended beta-hairpin is found that lines the wall of the exit tunnel in the center of the 70S ribosome. In Mesorhizobium japonicum (strain LMG 29417 / CECT 9101 / MAFF 303099) (Mesorhizobium loti (strain MAFF 303099)), this protein is Large ribosomal subunit protein uL22.